The sequence spans 389 residues: Cellobiose 2-epimerase (389 aa).

Belongs to the cellobiose 2-epimerase family. As to quaternary structure, monomer.

The catalysed reaction is D-cellobiose = beta-D-glucosyl-(1-&gt;4)-D-mannopyranose. Functionally, catalyzes the reversible epimerization of cellobiose to 4-O-beta-D-glucopyranosyl-D-mannose (Glc-Man). Catalyzes epimerization but also isomerization for beta-1,4- and alpha-1,4-gluco-oligosaccharides. Can use cellobiose, lactose, cellotriose, maltose and maltotriose. This Dictyoglomus turgidum (strain DSM 6724 / Z-1310) protein is Cellobiose 2-epimerase.